We begin with the raw amino-acid sequence, 522 residues long: Light-independent protochlorophyllide reductase subunit B (522 aa).

Residue Asp-36 coordinates [4Fe-4S] cluster. Asp-290 acts as the Proton donor in catalysis. 425 to 426 (GL) provides a ligand contact to substrate.

Belongs to the ChlB/BchB/BchZ family. Protochlorophyllide reductase is composed of three subunits; ChlL, ChlN and ChlB. Forms a heterotetramer of two ChlB and two ChlN subunits. It depends on [4Fe-4S] cluster as a cofactor.

The catalysed reaction is chlorophyllide a + oxidized 2[4Fe-4S]-[ferredoxin] + 2 ADP + 2 phosphate = protochlorophyllide a + reduced 2[4Fe-4S]-[ferredoxin] + 2 ATP + 2 H2O. It participates in porphyrin-containing compound metabolism; chlorophyll biosynthesis (light-independent). Its function is as follows. Component of the dark-operative protochlorophyllide reductase (DPOR) that uses Mg-ATP and reduced ferredoxin to reduce ring D of protochlorophyllide (Pchlide) to form chlorophyllide a (Chlide). This reaction is light-independent. The NB-protein (ChlN-ChlB) is the catalytic component of the complex. In Synechococcus sp. (strain CC9311), this protein is Light-independent protochlorophyllide reductase subunit B.